Consider the following 307-residue polypeptide: MSWLEKILTKSNIVSSRKVSIPEGVWTKCTSCEQVLYHADLERNLEVCPKCDHHMRMKARRRLETFLDTDSQVELAADLEPKDMLKFRDSKKYKDRISAAQKSSGEKDALIVMKGTLLEQPIVACAFEFSFMGGSMGSVVGAKFVRAVNEALESNCALVCFSASGGARMQEALMSLMQMAKTSAALQRLSAKGLPFISVLTDPTMGGVSASLAMLGDINIGEPKALIGFAGQRVIEQTVREKLPEGFQRSEFLLEHGAIDMIVNRREMRQRIGGLVAKMTNHSSPLVVPIEQPKLEESAPEQTPEQE.

The CoA carboxyltransferase N-terminal domain maps to 25–294 (VWTKCTSCEQ…PLVVPIEQPK (270 aa)). Cys29, Cys32, Cys48, and Cys51 together coordinate Zn(2+). Residues 29-51 (CTSCEQVLYHADLERNLEVCPKC) form a C4-type zinc finger.

The protein belongs to the AccD/PCCB family. In terms of assembly, acetyl-CoA carboxylase is a heterohexamer composed of biotin carboxyl carrier protein (AccB), biotin carboxylase (AccC) and two subunits each of ACCase subunit alpha (AccA) and ACCase subunit beta (AccD). Zn(2+) is required as a cofactor.

The protein localises to the cytoplasm. The catalysed reaction is N(6)-carboxybiotinyl-L-lysyl-[protein] + acetyl-CoA = N(6)-biotinyl-L-lysyl-[protein] + malonyl-CoA. The protein operates within lipid metabolism; malonyl-CoA biosynthesis; malonyl-CoA from acetyl-CoA: step 1/1. Functionally, component of the acetyl coenzyme A carboxylase (ACC) complex. Biotin carboxylase (BC) catalyzes the carboxylation of biotin on its carrier protein (BCCP) and then the CO(2) group is transferred by the transcarboxylase to acetyl-CoA to form malonyl-CoA. The protein is Acetyl-coenzyme A carboxylase carboxyl transferase subunit beta of Photobacterium profundum (strain SS9).